The primary structure comprises 239 residues: Caffeoyl-CoA O-methyltransferase 1 (239 aa).

Residue K13 participates in substrate binding. S-adenosyl-L-methionine is bound by residues T55, E77, 79-80 (GV), S85, D103, and A132. D155 lines the substrate pocket. D155 is a binding site for a divalent metal cation. D157 provides a ligand contact to S-adenosyl-L-methionine. A divalent metal cation is bound by residues D181 and N182. N186 contacts substrate.

Belongs to the class I-like SAM-binding methyltransferase superfamily. Cation-dependent O-methyltransferase family. CCoAMT subfamily. Monomer. Mg(2+) serves as cofactor. As to expression, mostly expressed in the bottom and middle parts of the stems.

The catalysed reaction is (E)-caffeoyl-CoA + S-adenosyl-L-methionine = (E)-feruloyl-CoA + S-adenosyl-L-homocysteine + H(+). The protein operates within aromatic compound metabolism; phenylpropanoid biosynthesis. In terms of biological role, methylates caffeoyl-CoA to feruloyl-CoA and 5-hydroxyferuloyl-CoA to sinapoyl-CoA. Plays a role in the synthesis of feruloylated polysaccharides. Involved in the reinforcement of the plant cell wall. Also involved in the responding to wounding or pathogen challenge by the increased formation of cell wall-bound ferulic acid polymers. The sequence is that of Caffeoyl-CoA O-methyltransferase 1 (CCOAOMT1) from Nicotiana tabacum (Common tobacco).